The sequence spans 105 residues: Meiotically up-regulated gene 52 protein (105 aa).

Its function is as follows. Has a role in meiosis. This Schizosaccharomyces pombe (strain 972 / ATCC 24843) (Fission yeast) protein is Meiotically up-regulated gene 52 protein (mug52).